The following is a 213-amino-acid chain: MRMNEPVDAQPAPSFLPMSRRFRGYLPVVVDVETGGFDWNKHALLEIACVPIEMGADGRFFPGETASAHLVPAPGLEIDPKSLEITGIVLDHPFRFAKQEKEALDHVFAPVRAAVKKYGCQRAILVGHNAHFDLNFLNAAVARVGHKRNPFHPFSVFDTVTLAGVAYGQTVLARAAQAAGLDWNAADAHSAVYDTEQTARLFCKIANAWPGPV.

In terms of domain architecture, Exonuclease spans 28 to 202 (VVVDVETGGF…YDTEQTARLF (175 aa)). The Mg(2+) site is built by D31, E33, H189, and D194. The Proton donor/acceptor role is filled by H189.

This sequence belongs to the RNase T family. Homodimer. The cofactor is Mg(2+).

Its function is as follows. Trims short 3' overhangs of a variety of RNA species, leaving a one or two nucleotide 3' overhang. Responsible for the end-turnover of tRNA: specifically removes the terminal AMP residue from uncharged tRNA (tRNA-C-C-A). Also appears to be involved in tRNA biosynthesis. In Xanthomonas axonopodis pv. citri (strain 306), this protein is Ribonuclease T.